The sequence spans 495 residues: Cytochrome P450 Tp4149 (495 aa).

The next 2 helical transmembrane spans lie at 4–24 and 208–228; these read ILSL…MFFI and YLSM…SWVD. N419 is a glycosylation site (N-linked (GlcNAc...) asparagine). C437 lines the heme pocket.

It belongs to the cytochrome P450 family. The cofactor is heme.

It localises to the membrane. Its pathway is secondary metabolite biosynthesis; terpenoid biosynthesis. In terms of biological role, probably involved in the biosynthesis of germacrene-derived sesquiterpene lactones. The protein is Cytochrome P450 Tp4149 of Tanacetum parthenium (Feverfew).